The following is a 591-amino-acid chain: Transcription factor COE1-A (591 aa).

An interaction with DNA region spans residues 63 to 66; the sequence is RKSN. A C5-type zinc finger spans residues 151–170; it reads CRVLLTHEIMCSRCCDKKSC. 2 interaction with DNA regions span residues 197 to 204 and 236 to 239; these read NCLKNAGN and NNSK. An IPT/TIG domain is found at 262–344; the sequence is PCIKAISPSE…CKGTPGRFIY (83 aa). Residues 454–466 are compositionally biased toward polar residues; that stretch reads ANQGFSRNTSSVS. Positions 454 to 484 are disordered; it reads ANQGFSRNTSSVSPHGYVPSTTPQQSSYSTV. Over residues 471–484 the composition is skewed to low complexity; it reads VPSTTPQQSSYSTV.

Belongs to the COE family. In terms of assembly, forms either a homodimer or a heterodimer with a related family member. Detected in B cells.

Its subcellular location is the nucleus. In terms of biological role, transcriptional activator. This is Transcription factor COE1-A from Danio rerio (Zebrafish).